We begin with the raw amino-acid sequence, 184 residues long: Thymidine kinase (184 aa).

ATP contacts are provided by residues 10-17 (GPMYSGKT) and 83-86 (DEVQ). The active-site Proton acceptor is Glu84. Zn(2+) is bound by residues Cys140, Cys143, Cys173, and Cys176.

This sequence belongs to the thymidine kinase family. As to quaternary structure, homotetramer.

Its subcellular location is the cytoplasm. It catalyses the reaction thymidine + ATP = dTMP + ADP + H(+). The polypeptide is Thymidine kinase (Thermotoga sp. (strain RQ2)).